The primary structure comprises 237 residues: Phosphoserine phosphatase (237 aa).

Residue aspartate 39 is the Nucleophile of the active site. Mg(2+) contacts are provided by aspartate 39 and glutamate 41. The Proton donor role is filled by glutamate 41. Residues glutamate 47, arginine 78, 122-123 (SD), and lysine 165 each bind substrate. Aspartate 184 is a binding site for Mg(2+). Asparagine 187 contributes to the substrate binding site.

Belongs to the thrH family. It depends on Mg(2+) as a cofactor.

It carries out the reaction O-phospho-L-serine + H2O = L-serine + phosphate. It catalyses the reaction O-phospho-D-serine + H2O = D-serine + phosphate. It participates in amino-acid biosynthesis; L-serine biosynthesis; L-serine from 3-phospho-D-glycerate: step 3/3. Functionally, phosphoserine phosphatase that mediates dephosphorylation of phosphoserine in the serine biosynthesis pathway. Also able to dephosphorylate phospho-threonine. The chain is Phosphoserine phosphatase from Pseudomonas syringae pv. tomato (strain ATCC BAA-871 / DC3000).